The sequence spans 300 residues: Histone deacetylase HDT3 (300 aa).

The span at 98–112 (EDEMDLDSEDEDEEL) shows a compositional bias: acidic residues. Positions 98–300 (EDEMDLDSED…AHSKAKHGGK (203 aa)) are disordered. Residues 119 to 132 (ENGKADEKKQKSQE) show a composition bias toward basic and acidic residues. A compositionally biased stretch (acidic residues) spans 151-197 (DDDSDEDETDDSDEDETDDSDEGLSPEEGDDDSSDEDDTSDDEEEDT). Residues 198–211 (PTPKKPEVGKKRAA) are compositionally biased toward basic and acidic residues. The segment covering 265–275 (SPKSAPKSGVP) has biased composition (low complexity). The segment at 274 to 297 (VPCKSCSKSFISETAPQAHSKAKH) adopts a C2H2-type zinc-finger fold. Polar residues predominate over residues 279-290 (CSKSFISETAPQ).

It belongs to the histone deacetylase HD2 family. In terms of assembly, multimer. Possibly forms a homotrimer with HDT1 and/or HDT2.

The protein localises to the nucleus. Its subcellular location is the nucleolus. Functionally, mediates the deacetylation of lysine residues on the N-terminal part of the core histones (H2A, H2B, H3 and H4). Histone deacetylation gives a tag for epigenetic repression and plays an important role in transcriptional regulation, cell cycle progression and developmental events. The protein is Histone deacetylase HDT3 (HDT3) of Zea mays (Maize).